The following is a 377-amino-acid chain: Probable G-protein coupled receptor 27 (377 aa).

Over 1–24 (MANASEPGGGGGGAEAAALGLRLA) the chain is Extracellular. Residue asparagine 3 is glycosylated (N-linked (GlcNAc...) asparagine). The chain crosses the membrane as a helical span at residues 25 to 45 (TLSLLLCVSLAGNVLFALLIV). Topologically, residues 46 to 56 (RERSLHRAPYY) are cytoplasmic. The helical transmembrane segment at 57-77 (LLLDLCLADGLRALACLPAVM) threads the bilayer. Topologically, residues 78–98 (LAARRAAAAAGTPPGALGCKL) are extracellular. Cysteines 96 and 173 form a disulfide. A helical transmembrane segment spans residues 99–119 (LAFLAALFCFHAAFLLLGVGV). Residues 120–140 (TRYLAIAHHRFYAERLAGWPC) are Cytoplasmic-facing. The helical transmembrane segment at 141–161 (AAMLVCAAWALALAAAFPPVL) threads the bilayer. The Extracellular segment spans residues 162–183 (DGGGADDEDAPCALEQRPDGAP). The chain crosses the membrane as a helical span at residues 184–204 (GALGFLLLLAAVVGATHLVYL). Residues 205 to 287 (RLLFFIHDRR…FKTEKRLCKM (83 aa)) are Cytoplasmic-facing. The helical transmembrane segment at 288-308 (FYAITLLFLLLWGPYVVASYL) threads the bilayer. The Extracellular segment spans residues 309 to 322 (RVLVRPGAVPQAYL). A helical transmembrane segment spans residues 323–343 (TASVWLTFAQAGINPVVCFLF). The Cytoplasmic portion of the chain corresponds to 344–377 (NRELRDCFRAQFPCCQSPQATQATLPCDLKGIGL).

The protein belongs to the G-protein coupled receptor 1 family. In terms of tissue distribution, expressed as a 3.0 kb transcript, in whole brain, hippocampus, striatum, frontal cortex, thalamus, pons and hypothalamus. A lower molecular weight transcript was detected in all regions examined, except the hypothalamus.

The protein resides in the cell membrane. Functionally, orphan receptor. Possible candidate for amine-like G-protein coupled receptor. This is Probable G-protein coupled receptor 27 (Gpr27) from Rattus norvegicus (Rat).